We begin with the raw amino-acid sequence, 913 residues long: Valine--tRNA ligase (913 aa).

Residues 48–58 (PNVTGSLHMGH) carry the 'HIGH' region motif. Residues 541–545 (KMSKS) carry the 'KMSKS' region motif. Lys-544 provides a ligand contact to ATP. Positions 839–907 (VVDLEALVSK…IEHRLQSLGV (69 aa)) form a coiled coil.

The protein belongs to the class-I aminoacyl-tRNA synthetase family. ValS type 1 subfamily. As to quaternary structure, monomer.

It localises to the cytoplasm. The enzyme catalyses tRNA(Val) + L-valine + ATP = L-valyl-tRNA(Val) + AMP + diphosphate. Functionally, catalyzes the attachment of valine to tRNA(Val). As ValRS can inadvertently accommodate and process structurally similar amino acids such as threonine, to avoid such errors, it has a 'posttransfer' editing activity that hydrolyzes mischarged Thr-tRNA(Val) in a tRNA-dependent manner. The polypeptide is Valine--tRNA ligase (Thermosynechococcus vestitus (strain NIES-2133 / IAM M-273 / BP-1)).